The sequence spans 181 residues: ATP-dependent protease subunit HslV (181 aa).

T9 is a catalytic residue. Na(+) contacts are provided by A166, C169, and T172.

It belongs to the peptidase T1B family. HslV subfamily. A double ring-shaped homohexamer of HslV is capped on each side by a ring-shaped HslU homohexamer. The assembly of the HslU/HslV complex is dependent on binding of ATP.

Its subcellular location is the cytoplasm. The enzyme catalyses ATP-dependent cleavage of peptide bonds with broad specificity.. With respect to regulation, allosterically activated by HslU binding. In terms of biological role, protease subunit of a proteasome-like degradation complex believed to be a general protein degrading machinery. This is ATP-dependent protease subunit HslV from Staphylococcus aureus (strain bovine RF122 / ET3-1).